The primary structure comprises 490 residues: Kinetochore protein Nuf2 homolog (490 aa).

Coiled-coil stretches lie at residues D146 to A280 and D310 to I407. Disordered stretches follow at residues Q346 to Q365 and I468 to K490.

This sequence belongs to the NUF2 family. Component of the NDC80 complex, which is composed of at least ndc-80 and him-10. The NDC80 complex interacts with knl-1.

It localises to the nucleus. The protein localises to the chromosome. It is found in the centromere. The protein resides in the kinetochore. Its function is as follows. Acts as a component of the essential kinetochore-associated NDC80 complex, which is required for chromosome segregation in mitosis and meiosis and spindle checkpoint activity. The ndc-80 complex synergistically enhances the affinity of the ska-1 complex for microtubules and may allow the ndc-80 complex to track depolymerizing microtubules. The sequence is that of Kinetochore protein Nuf2 homolog (him-10) from Caenorhabditis elegans.